Reading from the N-terminus, the 398-residue chain is Dual specificity protein phosphatase 4 (398 aa).

The residue at position 2 (Val-2) is an N-acetylvaline. The region spanning 45–163 (SGGKCLLLDC…FSSEYPEFCS (119 aa)) is the Rhodanese domain. Positions 199–340 (GPVEILPFLY…LLQFESQVLT (142 aa)) constitute a Tyrosine-protein phosphatase domain. The active-site Phosphocysteine intermediate is the Cys-284. Residues Ser-390 and Ser-395 each carry the phosphoserine; by MAPK modification.

It belongs to the protein-tyrosine phosphatase family. Non-receptor class dual specificity subfamily. In terms of assembly, hollow spherical complex composed of 24 subunits with pseudooctahedral symmetry, has a tetramer as the basic unit. Phosphorylation in the C-terminus by ERK1/2 inhibits proteasomal degradation and stabilizes the protein.

The protein localises to the nucleus. The catalysed reaction is O-phospho-L-tyrosyl-[protein] + H2O = L-tyrosyl-[protein] + phosphate. It carries out the reaction O-phospho-L-seryl-[protein] + H2O = L-seryl-[protein] + phosphate. The enzyme catalyses O-phospho-L-threonyl-[protein] + H2O = L-threonyl-[protein] + phosphate. In terms of biological role, regulates mitogenic signal transduction by dephosphorylating both Thr and Tyr residues on MAP kinases ERK1 and ERK2. This is Dual specificity protein phosphatase 4 (Dusp4) from Mus musculus (Mouse).